The chain runs to 204 residues: High frequency lysogenization protein HflD homolog (204 aa).

This sequence belongs to the HflD family.

The protein resides in the cytoplasm. Its subcellular location is the cell inner membrane. The sequence is that of High frequency lysogenization protein HflD homolog from Aeromonas hydrophila subsp. hydrophila (strain ATCC 7966 / DSM 30187 / BCRC 13018 / CCUG 14551 / JCM 1027 / KCTC 2358 / NCIMB 9240 / NCTC 8049).